Reading from the N-terminus, the 757-residue chain is MINQRLFEIDEWKIKTNTFNKEHTRLLESLTSLANGYMGVRGNFEEGYSGDSHQGTYIAGVWFPDKTRVGWWKNGYPEYFGKVINAMNFMGIGLYVDGEKIDLHQNPIELFEVELNMKEGILRRSAVVRIQDKTVRIRSERFLSLAVKELCAIHYEAECLTGDAVITLVPYLDGNVANEDSNYQEQFWQEEAKGADSHSGHLAAKTIENPFGTPRFTVLAAMANETEGFVHESFKTTEMYVENRYSYQTKASLKKFVIVTTSRDFREEELLSKAKELLADVVENGYEDAKRRHTDRWKERWAKADIEIKGDEELQQGIRYNIFQLFSTYYGGDARLNIGPKGFTGEKYGGAAYWDTEAYAVPMYLATAEPEVTKNLLLYRYHQLEAAKRNAAKLGMKGALYPMVTFTGDECHNEWEITFEEIHRNGAICYAIYNYINYTGDRNYMEEYGIDVLVAVSRFWADRVHFSKRKNKYMIHGVTGPNEYENNVNNNWYTNVIAAWTLEYTLQSLESISAEKRRHLDVQEVELEVWREIIQHMYYPFSEELQIFVQHDTFLDKDLQTVDELDPAERPLYQNWSWDKILRSNFIKQADVLQGIYLFNDRFTMEEKRRNFEFYEPMTVHESSLSPSVHAILAAELKLEKKALELYKRTARLDLDNYNHDTEEGLHITSMTGSWLAIVHGFAGMRTANETLSFAPFLPKEWDEYSFNINYRNRLINVTVDEKRVIFELVKGEPLHMNVYEEPVVLQGRCERRTPNE.

354–355 (WD) lines the substrate pocket. The active-site Proton donor is the E483. Residue 588-589 (KQ) participates in substrate binding.

Belongs to the glycosyl hydrolase 65 family.

The enzyme catalyses D-maltose + phosphate = beta-D-glucose 1-phosphate + D-glucose. It participates in glycan degradation; maltose degradation. Functionally, catalyzes the phosphorolysis of maltose, leading to the formation of glucose and glucose 1-P. The protein is Maltose phosphorylase (mdxK) of Bacillus subtilis (strain 168).